Reading from the N-terminus, the 87-residue chain is Phosphoribosyl-ATP pyrophosphatase (87 aa).

The protein belongs to the PRA-PH family.

The protein resides in the cytoplasm. The catalysed reaction is 1-(5-phospho-beta-D-ribosyl)-ATP + H2O = 1-(5-phospho-beta-D-ribosyl)-5'-AMP + diphosphate + H(+). The protein operates within amino-acid biosynthesis; L-histidine biosynthesis; L-histidine from 5-phospho-alpha-D-ribose 1-diphosphate: step 2/9. The polypeptide is Phosphoribosyl-ATP pyrophosphatase (Clavibacter sepedonicus (Clavibacter michiganensis subsp. sepedonicus)).